Here is a 198-residue protein sequence, read N- to C-terminus: Transcriptional regulator GfcR (198 aa).

The protein belongs to the purine/pyrimidine phosphoribosyltransferase family. GfcR subfamily.

The protein is Transcriptional regulator GfcR of Methanosphaera stadtmanae (strain ATCC 43021 / DSM 3091 / JCM 11832 / MCB-3).